A 118-amino-acid polypeptide reads, in one-letter code: Holo-[acyl-carrier-protein] synthase (118 aa).

Mg(2+) contacts are provided by Asp8 and Glu50.

Belongs to the P-Pant transferase superfamily. AcpS family. Requires Mg(2+) as cofactor.

The protein localises to the cytoplasm. It carries out the reaction apo-[ACP] + CoA = holo-[ACP] + adenosine 3',5'-bisphosphate + H(+). In terms of biological role, transfers the 4'-phosphopantetheine moiety from coenzyme A to a Ser of acyl-carrier-protein. The polypeptide is Holo-[acyl-carrier-protein] synthase (Leifsonia xyli subsp. xyli (strain CTCB07)).